Here is a 335-residue protein sequence, read N- to C-terminus: Homeobox protein unc-39 (335 aa).

Disordered stretches follow at residues 27–56 (FTSSSNSNTSNSSTSPSHISDQFSSSGGPP) and 269–294 (RRQRDKSNNSAKCSPPSSSSSTNGGS). Low complexity predominate over residues 28 to 41 (TSSSNSNTSNSSTS). Residues 42–53 (PSHISDQFSSSG) are compositionally biased toward polar residues. A DNA-binding region (homeobox) is located at residues 225-277 (KDSSRKFLKQFFRNVSEYPTQEQKREISRATGLKIVQISNWFKNRRQRDKSNN). Over residues 276-294 (NNSAKCSPPSSSSSTNGGS) the composition is skewed to low complexity.

The protein belongs to the SIX/Sine oculis homeobox family.

The protein resides in the nucleus. Probable transcription factor required for differentiation and migration of neuronal cells, such as RID and CAN neurons. Specifically, plays a role in the terminal differentiation of RID peptidergic neurons. Also required for CAN neuron axon guidance. The polypeptide is Homeobox protein unc-39 (Caenorhabditis elegans).